Reading from the N-terminus, the 490-residue chain is MPATQLLLLACLVWGLGARTAQLRKANDRSGRCQYTFSVASPNESSCPEQGQAMSAIQDLQRDSSAQRADLESTKARLRSLESLVHQLTLDEAAGPSATQEGLQRELGALRREREQLESQNRELEASYSNLLRDKSALEEEKRRLREENEDLARRLDSSSQEVARLRRGQCPQARGTPQDVPSGSREVSKWNVETVNFQELKSELTEVPASRILKESPSGHPRSEEGDPGCGELVWVGEPLTLRRAETITGKYGVWMRDPKPAYPYTQETTWRIDTVGTDIRQVFEYDLSSQFLQGYPSKVHVLPRPLESTGAVVYWGSLYFQGAESRTVIRYELNTETVKAEKEIPGAGYHGQFPYSWGGYTDIDLAVDETGLWVIYSTQEAKGAIVLSKLNPESLELERTWETNIRKQSVANAFIICGRLYTVSSYSAPDATINFAYDTGTGRSRALTVPFKNRYKYSSMVDYNPLEKKLFAWDNFNMVTYDLRLSEM.

The signal sequence occupies residues M1–A18. N43 carries N-linked (GlcNAc...) asparagine glycosylation. A coiled-coil region spans residues Q52–G169. Residues R146–D157 show a composition bias toward basic and acidic residues. Positions R146–V188 are disordered. The Olfactomedin-like domain occupies G230–E489. Cysteines 231 and 419 form a disulfide. 5 residues coordinate Ca(2+): D366, N414, A415, V463, and D464. The Microbody targeting signal motif lies at S488 to M490.

In terms of assembly, homodimer (via N-terminus). Can also form higher oligomers. Interacts with OLFM3, FN1, NRCAM, GLDN and NFASC. Interacts (via N-terminus) with MYL2. Interacts with SFRP1, FRZB, FZD7, FZD10, FZD1 and WIF1; regulates Wnt signaling. Interacts with SNTA1; regulates muscle hypertrophy. Interacts with ERBB2 and ERBB3; activates ERBB2-ERBB3 signaling pathway. Interacts with SNCG; affects its secretion and its aggregation. In terms of processing, palmitoylated. Post-translationally, undergoes a calcium-dependent proteolytic cleavage at Arg-212 by CAPN2 in the endoplasmic reticulum. The result is the production of two fragments, one of 35 kDa containing the C-terminal olfactomedin-like domain, and another of 20 kDa containing the N-terminal leucine zipper-like domain. Glycosylated. As to expression, expressed in optic nerve head, ciliary body and retina.

It localises to the secreted. It is found in the golgi apparatus. The protein localises to the cytoplasmic vesicle. Its subcellular location is the extracellular space. The protein resides in the extracellular matrix. It localises to the extracellular exosome. It is found in the mitochondrion. The protein localises to the mitochondrion intermembrane space. Its subcellular location is the mitochondrion inner membrane. The protein resides in the mitochondrion outer membrane. It localises to the rough endoplasmic reticulum. It is found in the cell projection. The protein localises to the cilium. Its subcellular location is the endoplasmic reticulum. Its function is as follows. Secreted glycoprotein regulating the activation of different signaling pathways in adjacent cells to control different processes including cell adhesion, cell-matrix adhesion, cytoskeleton organization and cell migration. Promotes substrate adhesion, spreading and formation of focal contacts. Negatively regulates cell-matrix adhesion and stress fiber assembly through Rho protein signal transduction. Modulates the organization of actin cytoskeleton by stimulating the formation of stress fibers through interactions with components of Wnt signaling pathways. Promotes cell migration through activation of PTK2 and the downstream phosphatidylinositol 3-kinase signaling. Plays a role in bone formation and promotes osteoblast differentiation in a dose-dependent manner through mitogen-activated protein kinase signaling. Mediates myelination in the peripheral nervous system through ERBB2/ERBB3 signaling. Plays a role as a regulator of muscle hypertrophy through the components of dystrophin-associated protein complex. Involved in positive regulation of mitochondrial depolarization. Plays a role in neurite outgrowth. May participate in the obstruction of fluid outflow in the trabecular meshwork. The chain is Myocilin (MYOC) from Felis catus (Cat).